The primary structure comprises 828 residues: Vacuolar transporter chaperone complex subunit 2 (828 aa).

Residues 1–146 form the SPX domain; sequence MLFGVKLANE…PKYPSVKSLL (146 aa). The Cytoplasmic segment spans residues 1–693; that stretch reads MLFGVKLANE…EAKVWLANER (693 aa). The important for inositol polyphosphate binding stretch occupies residues 127–134; sequence KIVKKHDK. Phosphoserine is present on residues Ser182, Ser187, Ser196, Ser264, Ser583, Ser615, and Ser616. The tract at residues 580 to 636 is disordered; the sequence is RRLSNLKEPQHQAAVPVSQEENERITSQGDLEADGSSDEETEQEPHSKRSKKVRRRK. Over residues 610–621 the composition is skewed to acidic residues; that stretch reads LEADGSSDEETE. Position 620 is a phosphothreonine (Thr620). Phosphoserine is present on Ser626. The span at 627–636 shows a compositional bias: basic residues; it reads KRSKKVRRRK. Ser657 is modified (phosphoserine). A helical membrane pass occupies residues 694–716; sequence TFNRWLSVTSLLSVLTFSIYNSV. Residues 717–727 lie on the Vacuolar side of the membrane; it reads KKAEYPTLANY. The helical transmembrane segment at 728–748 threads the bilayer; the sequence is MAYVYFGLTIFCALWSYSIYM. Over 749-766 the chain is Cytoplasmic; sequence KRVDIIQQRSGQHLDAPL. The helical transmembrane segment at 767–787 threads the bilayer; it reads GPVLVSIVLFVTLVVNFVMAF. Topologically, residues 788-828 are vacuolar; it reads RNAAKSRQELQIQNLEVPERIPEVLRPLQNYLFKLMGPSSD.

It belongs to the VTC2/3 family. In terms of assembly, the VTC core complex is an integral membrane heterooligomer composed of the catalytic subunit VTC4 and the accessory subunits VTC1, VTC2 and VTC3. The complex exists in 2 different sub-complexes: VTC1-VTC2-VCT4 and VCT1-VTC3-VTC4. The VCT1-VTC3-VTC4 subcomplex is mostly found on the vacuolar membrane. The VTC1-VTC2-VCT4 subcomplex is observed in the cell periphery, probably ER and nuclear envelope, but localizes to the vacuole under phosphate starvation. Each subunit contains 3 transmembrane helices. VTC1 is a small membrane protein without hydrophilic domain. VTC2, VTC3 and VTC4 are related and have 2 hydrophilic domains that face the cytosol, an N-terminal SPX domain and the central core domain. The central core in VTC4 is the catalytic domain, with the essential catalytic lysine replaced by isoleucine and leucine in VTC2 and VTC3, respectively. The core complex associates with the accessory subunit VTC5. The complex interacts with the v-SNARE NYV1 and with the V(0) subunit of V-ATPase VPH1.

It localises to the vacuole membrane. The protein localises to the cytoplasm. It is found in the cell cortex. The protein resides in the endoplasmic reticulum membrane. Its subcellular location is the cytoplasmic vesicle. It localises to the autophagosome membrane. Accessory subunit of the vacuolar transporter chaperone (VTC) complex. The VTC complex acts as a vacuolar polyphosphate polymerase that catalyzes the synthesis of inorganic polyphosphate (polyP) via transfer of phosphate from ATP to a growing polyP chain, releasing ADP. VTC exposes its catalytic domain VTC4 to the cytosol, where the growing polyP chain winds through a tunnel-shaped pocket, integrating cytoplasmic polymer synthesis with polyP membrane translocation. The VTC complex carries 9 vacuolar transmembrane domains, which are likely to constitute the translocation channel into the organelle lumen. PolyP synthesis is tightly coupled to its transport into the vacuole lumen, in order to avoid otherwise toxic intermediates in the cytosol, and it depends on the proton gradient across the membrane, formed by V-ATPase. Binds inositol hexakisphosphate (Ins6P) and similar inositol polyphosphates, such as 5-diphospho-inositol pentakisphosphate (5-InsP7); these are important intracellular signaling molecules. Inositol polyphosphate binding promotes vacuolar polyphosphate synthesis. The VTC complex also plays a role in vacuolar membrane fusion. Required for SEC18/NSF activity in SNARE priming, membrane binding of LMA1 and V(0) trans-complex formation. In Saccharomyces cerevisiae (strain ATCC 204508 / S288c) (Baker's yeast), this protein is Vacuolar transporter chaperone complex subunit 2.